Here is a 430-residue protein sequence, read N- to C-terminus: Dihydroorotase (430 aa).

Zn(2+) contacts are provided by His-61 and His-63. Residues 63–65 and Asn-95 contribute to the substrate site; that span reads HLR. The Zn(2+) site is built by Asp-153, His-180, and His-233. Asn-279 provides a ligand contact to substrate. Asp-306 contributes to the Zn(2+) binding site. Asp-306 is an active-site residue. Residue His-310 coordinates substrate.

It belongs to the metallo-dependent hydrolases superfamily. DHOase family. Class I DHOase subfamily. Zn(2+) is required as a cofactor.

It catalyses the reaction (S)-dihydroorotate + H2O = N-carbamoyl-L-aspartate + H(+). Its pathway is pyrimidine metabolism; UMP biosynthesis via de novo pathway; (S)-dihydroorotate from bicarbonate: step 3/3. Its function is as follows. Catalyzes the reversible cyclization of carbamoyl aspartate to dihydroorotate. The chain is Dihydroorotase from Caldicellulosiruptor saccharolyticus (strain ATCC 43494 / DSM 8903 / Tp8T 6331).